Here is a 329-residue protein sequence, read N- to C-terminus: GTP 3',8-cyclase (329 aa).

Positions 1–229 constitute a Radical SAM core domain; sequence MNPVDYLRIS…TAFVQGNGPA (229 aa). Arginine 8 lines the GTP pocket. 2 residues coordinate [4Fe-4S] cluster: cysteine 15 and cysteine 19. An S-adenosyl-L-methionine-binding site is contributed by tyrosine 21. [4Fe-4S] cluster is bound at residue cysteine 22. Arginine 60 is a binding site for GTP. Glycine 64 provides a ligand contact to S-adenosyl-L-methionine. Position 91 (threonine 91) interacts with GTP. Serine 115 is an S-adenosyl-L-methionine binding site. Position 155 (lysine 155) interacts with GTP. Methionine 189 provides a ligand contact to S-adenosyl-L-methionine. Positions 252 and 255 each coordinate [4Fe-4S] cluster. 257 to 259 is a GTP binding site; that stretch reads RMR. Cysteine 269 is a binding site for [4Fe-4S] cluster.

The protein belongs to the radical SAM superfamily. MoaA family. As to quaternary structure, monomer and homodimer. [4Fe-4S] cluster serves as cofactor.

It catalyses the reaction GTP + AH2 + S-adenosyl-L-methionine = (8S)-3',8-cyclo-7,8-dihydroguanosine 5'-triphosphate + 5'-deoxyadenosine + L-methionine + A + H(+). It participates in cofactor biosynthesis; molybdopterin biosynthesis. In terms of biological role, catalyzes the cyclization of GTP to (8S)-3',8-cyclo-7,8-dihydroguanosine 5'-triphosphate. The chain is GTP 3',8-cyclase from Picosynechococcus sp. (strain ATCC 27264 / PCC 7002 / PR-6) (Agmenellum quadruplicatum).